Consider the following 250-residue polypeptide: NADH-quinone oxidoreductase subunit C (250 aa).

Belongs to the complex I 30 kDa subunit family. As to quaternary structure, NDH-1 is composed of 14 different subunits. Subunits NuoB, C, D, E, F, and G constitute the peripheral sector of the complex.

It localises to the cell inner membrane. It catalyses the reaction a quinone + NADH + 5 H(+)(in) = a quinol + NAD(+) + 4 H(+)(out). Functionally, NDH-1 shuttles electrons from NADH, via FMN and iron-sulfur (Fe-S) centers, to quinones in the respiratory chain. The immediate electron acceptor for the enzyme in this species is believed to be ubiquinone. Couples the redox reaction to proton translocation (for every two electrons transferred, four hydrogen ions are translocated across the cytoplasmic membrane), and thus conserves the redox energy in a proton gradient. In Xanthomonas euvesicatoria pv. vesicatoria (strain 85-10) (Xanthomonas campestris pv. vesicatoria), this protein is NADH-quinone oxidoreductase subunit C.